The sequence spans 132 residues: Small ribosomal subunit protein uS11 (132 aa).

The protein belongs to the universal ribosomal protein uS11 family. As to quaternary structure, part of the 30S ribosomal subunit. Interacts with proteins S7 and S18. Binds to IF-3.

Functionally, located on the platform of the 30S subunit, it bridges several disparate RNA helices of the 16S rRNA. Forms part of the Shine-Dalgarno cleft in the 70S ribosome. The sequence is that of Small ribosomal subunit protein uS11 from Chlamydia muridarum (strain MoPn / Nigg).